Consider the following 470-residue polypeptide: Uronate isomerase (470 aa).

It belongs to the metallo-dependent hydrolases superfamily. Uronate isomerase family.

It catalyses the reaction D-glucuronate = D-fructuronate. It carries out the reaction aldehydo-D-galacturonate = keto-D-tagaturonate. Its pathway is carbohydrate metabolism; pentose and glucuronate interconversion. The polypeptide is Uronate isomerase (Vibrio vulnificus (strain CMCP6)).